Consider the following 87-residue polypeptide: Small ribosomal subunit protein bS20 (87 aa).

The segment at 1-22 is disordered; the sequence is MANSAQARKRARQSLKARAHNA. A compositionally biased stretch (basic residues) spans 7–19; that stretch reads ARKRARQSLKARA.

The protein belongs to the bacterial ribosomal protein bS20 family.

Functionally, binds directly to 16S ribosomal RNA. This is Small ribosomal subunit protein bS20 from Laribacter hongkongensis (strain HLHK9).